The following is a 102-amino-acid chain: Small ribosomal subunit protein uS10 (102 aa).

This sequence belongs to the universal ribosomal protein uS10 family. As to quaternary structure, part of the 30S ribosomal subunit.

Functionally, involved in the binding of tRNA to the ribosomes. The sequence is that of Small ribosomal subunit protein uS10 from Oceanobacillus iheyensis (strain DSM 14371 / CIP 107618 / JCM 11309 / KCTC 3954 / HTE831).